The sequence spans 318 residues: NADH-ubiquinone oxidoreductase chain 1 (318 aa).

Transmembrane regions (helical) follow at residues 2-22 (FMIN…FLTL), 69-89 (LLFT…WLPL), 100-120 (LGVL…LWSG), 146-166 (LAII…TNLI), 171-191 (HMWL…STLA), 231-251 (IMMM…TPLV), 253-273 (GIYT…FLWI), and 285-305 (LMHL…MWHV).

It belongs to the complex I subunit 1 family. As to quaternary structure, core subunit of respiratory chain NADH dehydrogenase (Complex I) which is composed of 45 different subunits.

Its subcellular location is the mitochondrion inner membrane. It catalyses the reaction a ubiquinone + NADH + 5 H(+)(in) = a ubiquinol + NAD(+) + 4 H(+)(out). In terms of biological role, core subunit of the mitochondrial membrane respiratory chain NADH dehydrogenase (Complex I) which catalyzes electron transfer from NADH through the respiratory chain, using ubiquinone as an electron acceptor. Essential for the catalytic activity and assembly of complex I. The chain is NADH-ubiquinone oxidoreductase chain 1 (MT-ND1) from Myrmecophaga tridactyla (Giant anteater).